The following is a 526-amino-acid chain: Fatty-acid amide hydrolase 2-B (526 aa).

The helical transmembrane segment at 12 to 32 (CLLVLVSGLFLALFRLLSPGT) threads the bilayer. Active-site charge relay system residues include Lys-128 and Ser-203. Ser-227 (acyl-ester intermediate) is an active-site residue.

This sequence belongs to the amidase family.

The protein resides in the membrane. It catalyses the reaction N-(5Z,8Z,11Z,14Z-eicosatetraenoyl)-ethanolamine + H2O = ethanolamine + (5Z,8Z,11Z,14Z)-eicosatetraenoate. The catalysed reaction is (9Z)-octadecenamide + H2O = (9Z)-octadecenoate + NH4(+). This Danio rerio (Zebrafish) protein is Fatty-acid amide hydrolase 2-B (faah2b).